A 149-amino-acid chain; its full sequence is Ribonuclease H (149 aa).

In terms of domain architecture, RNase H type-1 spans 1–141 (MKTVTLFSDG…CDTMAREKAT (141 aa)). Mg(2+) is bound by residues aspartate 9, glutamate 47, aspartate 69, and aspartate 133.

This sequence belongs to the RNase H family. In terms of assembly, monomer. It depends on Mg(2+) as a cofactor.

The protein localises to the cytoplasm. It catalyses the reaction Endonucleolytic cleavage to 5'-phosphomonoester.. Functionally, endonuclease that specifically degrades the RNA of RNA-DNA hybrids. The chain is Ribonuclease H from Campylobacter curvus (strain 525.92).